A 503-amino-acid polypeptide reads, in one-letter code: Na(+)-translocating NADH-quinone reductase subunit B (503 aa).

A run of 4 helical transmembrane segments spans residues Met55–Ile75, Ile120–Ala140, Thr161–Val181, and Phe186–Phe206. Thr248 is modified (FMN phosphoryl threonine). The next 5 helical transmembrane spans lie at Thr361–Trp381, Phe387–Gly407, Phe417–Met437, Trp452–Tyr472, and Gly475–Val495.

This sequence belongs to the NqrB/RnfD family. In terms of assembly, composed of six subunits; NqrA, NqrB, NqrC, NqrD, NqrE and NqrF. The cofactor is FMN.

It localises to the cell inner membrane. It catalyses the reaction a ubiquinone + n Na(+)(in) + NADH + H(+) = a ubiquinol + n Na(+)(out) + NAD(+). In terms of biological role, NQR complex catalyzes the reduction of ubiquinone-1 to ubiquinol by two successive reactions, coupled with the transport of Na(+) ions from the cytoplasm to the periplasm. NqrA to NqrE are probably involved in the second step, the conversion of ubisemiquinone to ubiquinol. The sequence is that of Na(+)-translocating NADH-quinone reductase subunit B from Chlamydia abortus (strain DSM 27085 / S26/3) (Chlamydophila abortus).